The sequence spans 373 residues: Cathecol O-methyltransferase 1 (373 aa).

S-adenosyl-L-homocysteine contacts are provided by Gly209, Asp232, Asp252, Met253, Met265, and Lys266. Residue Asp232 participates in S-adenosyl-L-methionine binding. Catalysis depends on His279, which acts as the Proton acceptor.

Belongs to the class I-like SAM-binding methyltransferase superfamily. Cation-independent O-methyltransferase family. COMT subfamily.

It catalyses the reaction catechol + S-adenosyl-L-methionine = guaiacol + S-adenosyl-L-homocysteine + H(+). In terms of biological role, O-methyltransferase that catalyzes the conversion of catechol to guaiacol. Involved in the production of guaiacol in fruits. The chain is Cathecol O-methyltransferase 1 from Solanum lycopersicum (Tomato).